A 441-amino-acid polypeptide reads, in one-letter code: Serum response factor-binding protein 1 (441 aa).

2 coiled-coil regions span residues 52–77 and 118–140; these read KGTE…AMKE and LLKK…RQSA. Disordered stretches follow at residues 137–342, 357–389, and 406–441; these read RQSA…RNDK, FHSL…EPPV, and QTMQ…TFDD. A compositionally biased stretch (low complexity) spans 139–152; sequence SAPAAESSESTSGE. The span at 153-183 shows a compositional bias: basic and acidic residues; it reads GRCKDIARSKDDARESQHPERTVVREQKAKD. Lys-201 participates in a covalent cross-link: Glycyl lysine isopeptide (Lys-Gly) (interchain with G-Cter in SUMO2). A Phosphoserine modification is found at Ser-214. Residues 237–246 show a composition bias toward polar residues; it reads DSNQGKASTK. Positions 269–282 are enriched in basic and acidic residues; sequence EKEYFDDSTEERFY. A phosphoserine mark is found at Ser-276, Ser-291, and Ser-293. Residues 308–321 show a composition bias toward basic and acidic residues; the sequence is KESGVHSSAKELKP. Residue Lys-328 forms a Glycyl lysine isopeptide (Lys-Gly) (interchain with G-Cter in SUMO2) linkage. A compositionally biased stretch (basic and acidic residues) spans 366–381; the sequence is SRRDPREQAPKNKAPD.

As to quaternary structure, interacts with SRF. Forms complexes with SRF and SRF cofactors ARID2, MYOCD and NKX2-5. Interacts with the N-terminus of SLC2A4. Highly expressed in heart, skeletal muscle, liver, kidney, testis and brain. Also expressed in white adipose tissue. Expression is up-regulated in cardiomyopathic heart.

It is found in the cytoplasm. Its subcellular location is the perinuclear region. Functionally, may be involved in regulating transcriptional activation of cardiac genes during the aging process. May play a role in biosynthesis and/or processing of SLC2A4 in adipose cells. The chain is Serum response factor-binding protein 1 from Mus musculus (Mouse).